A 513-amino-acid chain; its full sequence is GMP synthase [glutamine-hydrolyzing] (513 aa).

Positions K8–N198 constitute a Glutamine amidotransferase type-1 domain. C85 serves as the catalytic Nucleophile. Residues H172 and E174 contribute to the active site. Residues W199 to R388 enclose the GMPS ATP-PPase domain. S226–S232 is a binding site for ATP.

In terms of assembly, homodimer.

It carries out the reaction XMP + L-glutamine + ATP + H2O = GMP + L-glutamate + AMP + diphosphate + 2 H(+). Its pathway is purine metabolism; GMP biosynthesis; GMP from XMP (L-Gln route): step 1/1. Catalyzes the synthesis of GMP from XMP. The sequence is that of GMP synthase [glutamine-hydrolyzing] (guaA) from Lactococcus lactis subsp. cremoris (strain MG1363).